We begin with the raw amino-acid sequence, 1155 residues long: MIKRVHLGQGRADEILDLPNLIEIQLNSYEKFLQLDKLKSKKPLLNEGLESVFRNIFPIKSGNGDVALEYERYYIENDALNFTEKECKRKGQSYEAVLKVRLNLQFLTTGEIRQKDVYMGTIPLMTERGTFIINGAERVVVSQIHRSPGVVFYKEKDLYSARIIPYRGSWLEFEIDSKKDYLYVKIDRKKRILITLFLRALGFDTREKIIETFYNIKKIKVEDGTKRDLPGQYLAKSINIRENMYYRAGDKITLQDVEDFLQNGVNEIELVDFDGYDDISGKRFVSSNVILNCLEKEDAFFALKDGSKELPKESVMLAVYSSLFPGEPISIDNAENDLKTIFFSERRYDLGRVGRYKLSKKFGFDDLTTSVLTMDDIVNTISHLLRIYEGHDILDDIDHLGNRRVRSVGELLTNIYKGAMSRVEKIAKDRMSNKEVFNLKPQELISVKPIVSAVKEFFATSQLSQFMDQVNPLAELTHKRRLNALGPGGLSRDRAGFEVRDVHYTHYGRMCPIETPEGPNIGLIVSLATYSRVNDYGFLETPYRKVVNGEVTDQLEYLSAIDEEKKCIAQANAAFNSNGKYLEDLVSVRISGDYTTTSPTNIDYMDVSPRQLISVSSALIPFLEHNDANRALMGSNMQRQAVPLLFPKPPIVGTGMESVVAKDSGVVVKAKRSGEVILATSSKIVVKPFEAENAKDLDEYHIVKYERTNQDTCFNQSVLVKEGQKVERGEIIADGPATRYGELALGNNLLLGVIPWNGFNYEDAILISDRIVKEDLYTSIHIKEFSIEVRETKLGPEKVTGDIPNVSEKILNKLDENGIIRIGTYVKPGDILVGKVTPKSEGDITPEFRLLTSIFGEKAKDVKNNSLKVPHGTEGTVIDVQRITKEDVGNLSPGVEEILKVYVAKKRKLKEGDKMAGRHGNKGVVAKILPVEDMPYLADGTPLDICLNPLGVPSRMNIGQLMESQLGLAGKYLGESYNVPVFESATNEQIQEKLKTAGFNPTSKEILYDGYTGEPFENEVMVGVIYMLKLHHLVDDKMHARSTGPYSLVSQQPLGGKAQFGGQRLGEMEVWALEAYGAAHTLQELLTVKSDDMSGRVKIYENIVKGVPTNVSGIPESFNVLMQELRGLGLDLSIYDDAGNQVPLTEKEEELINKS.

It belongs to the RNA polymerase beta chain family. The RNAP catalytic core consists of 2 alpha, 1 beta, 1 beta' and 1 omega subunit. When a sigma factor is associated with the core the holoenzyme is formed, which can initiate transcription.

The enzyme catalyses RNA(n) + a ribonucleoside 5'-triphosphate = RNA(n+1) + diphosphate. In terms of biological role, DNA-dependent RNA polymerase catalyzes the transcription of DNA into RNA using the four ribonucleoside triphosphates as substrates. In Borreliella burgdorferi (strain ZS7) (Borrelia burgdorferi), this protein is DNA-directed RNA polymerase subunit beta.